The primary structure comprises 109 residues: Iron-sulfur assembly protein IscA-like 3, mitochondrial (109 aa).

Residues 1-18 (MRKQVLALSDTAAARIRQ) constitute a mitochondrion transit peptide. Cys37, Cys100, and Cys102 together coordinate Fe cation.

Belongs to the HesB/IscA family. In terms of assembly, homodimer; may form tetramers and higher multimers. Fe cation serves as cofactor.

It localises to the mitochondrion. In terms of biological role, involved in the assembly of mitochondrial iron-sulfur proteins. Probably involved in the binding of an intermediate of Fe/S cluster assembly. This Arabidopsis thaliana (Mouse-ear cress) protein is Iron-sulfur assembly protein IscA-like 3, mitochondrial.